The following is a 400-amino-acid chain: Elongation factor Tu (400 aa).

A tr-type G domain is found at 10–209 (KEHVNIGTIG…QVDNWIDAPL (200 aa)). Residues 19–26 (GHVDHGKT) are G1. Position 19–26 (19–26 (GHVDHGKT)) interacts with GTP. Thr26 is a binding site for Mg(2+). Positions 61 to 65 (GITIN) are G2. Residues 82-85 (DCPG) form a G3 region. Residues 82 to 86 (DCPGH) and 137 to 140 (NKVD) contribute to the GTP site. The G4 stretch occupies residues 137–140 (NKVD). The G5 stretch occupies residues 179 to 181 (SAL).

It belongs to the TRAFAC class translation factor GTPase superfamily. Classic translation factor GTPase family. EF-Tu/EF-1A subfamily. Monomer.

Its subcellular location is the cytoplasm. It catalyses the reaction GTP + H2O = GDP + phosphate + H(+). In terms of biological role, GTP hydrolase that promotes the GTP-dependent binding of aminoacyl-tRNA to the A-site of ribosomes during protein biosynthesis. The chain is Elongation factor Tu from Mycoplasma mobile (strain ATCC 43663 / 163K / NCTC 11711) (Mesomycoplasma mobile).